A 908-amino-acid polypeptide reads, in one-letter code: Glutamate receptor ionotropic, kainate 2 (908 aa).

Residues 1–31 form the signal peptide; sequence MQRIAGITKMVTHRRWLGLLLLLLCVGYSHG. Residues 32–561 are Extracellular-facing; it reads MPHVLRFGGI…VFSFLNPLSP (530 aa). N-linked (GlcNAc...) asparagine glycosylation is found at Asn-67, Asn-73, Asn-275, Asn-378, Asn-412, Asn-423, and Asn-430. Residues Cys-96 and Cys-347 are joined by a disulfide bond. L-glutamate is bound by residues Pro-516, Ala-518, and Arg-523. Asn-546 carries an N-linked (GlcNAc...) asparagine glycan. The helical transmembrane segment at 562–582 threads the bilayer; the sequence is DIWMYILLAYLGVSCVLFVIA. At 583-638 the chain is on the cytoplasmic side; that stretch reads RFSPYEWYNPHPCNPDSDVVENNFTLLNSFWFGVGALMQQGSELMPKALSTRIVGG. The chain crosses the membrane as a helical span at residues 639–659; sequence IWWFFTLIIISSYTANLAAFL. At 660 to 819 the chain is on the extracellular side; the sequence is TVERMESPID…KEASALGVQN (160 aa). L-glutamate is bound by residues Ser-689, Thr-690, and Glu-738. Cys-750 and Cys-804 form a disulfide bridge. Residue Asn-751 is glycosylated (N-linked (GlcNAc...) asparagine). The helical transmembrane segment at 820-840 threads the bilayer; the sequence is IGGIFIVLAAGLVLSVFVAVG. Residues 841–908 lie on the Cytoplasmic side of the membrane; sequence EFLYKSKQNA…RRLPGKETMA (68 aa).

This sequence belongs to the glutamate-gated ion channel (TC 1.A.10.1) family. GRIK2 subfamily. In terms of assembly, homotetramer and heterotetramer with GRIK5. Tetramers may be formed by the dimerization of dimers.

The protein localises to the cell membrane. Its subcellular location is the postsynaptic cell membrane. The enzyme catalyses Ca(2+)(in) = Ca(2+)(out). It carries out the reaction Na(+)(in) = Na(+)(out). With respect to regulation, cold receptor activity activated by temperatures between 10-19 degrees Celsius. Functionally, ionotropic glutamate receptor that functions as a cation-permeable ligand-gated ion channel, gated by L-glutamate and the glutamatergic agonist kainic acid. L-glutamate acts as an excitatory neurotransmitter at many synapses in the central nervous system. Binding of the excitatory neurotransmitter L-glutamate induces a conformation change, leading to the opening of the cation channel, and thereby converts the chemical signal to an electrical impulse. The receptor then desensitizes rapidly and enters a transient inactive state, characterized by the presence of bound agonist. Independent of its ionotropic glutamate receptor activity, acts as a thermoreceptor conferring sensitivity to cold temperatures. Functions in dorsal root ganglion neurons. The sequence is that of Glutamate receptor ionotropic, kainate 2 from Danio rerio (Zebrafish).